A 255-amino-acid chain; its full sequence is Acetylglutamate kinase (255 aa).

Substrate is bound by residues 40–41 (GG), Arg-62, and Asn-153.

Belongs to the acetylglutamate kinase family. ArgB subfamily.

The protein resides in the cytoplasm. The enzyme catalyses N-acetyl-L-glutamate + ATP = N-acetyl-L-glutamyl 5-phosphate + ADP. Its pathway is amino-acid biosynthesis; L-arginine biosynthesis; N(2)-acetyl-L-ornithine from L-glutamate: step 2/4. Functionally, catalyzes the ATP-dependent phosphorylation of N-acetyl-L-glutamate. The chain is Acetylglutamate kinase from Bacillus cereus (strain AH820).